Consider the following 59-residue polypeptide: Large ribosomal subunit protein bL32 (59 aa).

This sequence belongs to the bacterial ribosomal protein bL32 family.

The protein is Large ribosomal subunit protein bL32 of Thermodesulfovibrio yellowstonii (strain ATCC 51303 / DSM 11347 / YP87).